A 142-amino-acid chain; its full sequence is Nucleoside diphosphate kinase (142 aa).

6 residues coordinate ATP: Lys-9, Phe-57, Arg-85, Thr-91, Arg-102, and Asn-112. A disordered region spans residues 87–106 (AMGATDPAKSEKGTVRGDLG). His-115 (pros-phosphohistidine intermediate) is an active-site residue.

This sequence belongs to the NDK family. In terms of assembly, homotetramer. It depends on Mg(2+) as a cofactor.

The protein localises to the cytoplasm. The enzyme catalyses a 2'-deoxyribonucleoside 5'-diphosphate + ATP = a 2'-deoxyribonucleoside 5'-triphosphate + ADP. It catalyses the reaction a ribonucleoside 5'-diphosphate + ATP = a ribonucleoside 5'-triphosphate + ADP. Major role in the synthesis of nucleoside triphosphates other than ATP. The ATP gamma phosphate is transferred to the NDP beta phosphate via a ping-pong mechanism, using a phosphorylated active-site intermediate. This is Nucleoside diphosphate kinase from Dehalococcoides mccartyi (strain ATCC BAA-2266 / KCTC 15142 / 195) (Dehalococcoides ethenogenes (strain 195)).